The primary structure comprises 441 residues: Transducin-like enhancer protein 7 (441 aa).

Disordered stretches follow at residues 1–77 and 91–119; these read MSGE…QWHL and PDAQ…SSSS. Residues 27–49 are compositionally biased toward low complexity; that stretch reads ESSGVSSQPEPQVQQQLGSLLGV. Residues 62–76 show a composition bias toward polar residues; sequence PADQETSTVTQQQWH. Low complexity predominate over residues 108–119; the sequence is GSEVGQPYSSSS. WD repeat units lie at residues 156-194, 204-243, 247-285, 286-325, and 409-441; these read FHGK…AGEK, HPQD…QVRA, STGP…LIRK, HEVP…RLHQ, and EESS…QLLY.

The protein belongs to the WD repeat Groucho/TLE family.

The chain is Transducin-like enhancer protein 7 from Homo sapiens (Human).